The chain runs to 479 residues: Serine carboxypeptidase-like 29 (479 aa).

Positions 1–28 (MAKTRGSCCLVNALIAIAFLATAHLCEA) are cleaved as a signal peptide. N-linked (GlcNAc...) asparagine glycans are attached at residues Asn-47 and Asn-144. Disulfide bonds link Cys-93-Cys-349, Cys-254-Cys-266, and Cys-290-Cys-317. Ser-186 is a catalytic residue. An N-linked (GlcNAc...) asparagine glycan is attached at Asn-293. Active-site residues include Asp-386 and His-438.

This sequence belongs to the peptidase S10 family. In terms of tissue distribution, expressed in seedlings, roots, leaves and flowers.

Its subcellular location is the secreted. Functionally, probable carboxypeptidase. The chain is Serine carboxypeptidase-like 29 (SCPL29) from Arabidopsis thaliana (Mouse-ear cress).